Consider the following 396-residue polypeptide: Multidrug resistance protein MdtL (396 aa).

Over 1 to 4 (MFRY) the chain is Cytoplasmic. The chain crosses the membrane as a helical span at residues 5–25 (LLCCFGLVLMYPTGIDMYLVG). Residues 26 to 41 (LPQIANQLGATEAQLH) lie on the Periplasmic side of the membrane. A helical transmembrane segment spans residues 42–62 (IAFSVYLAGMATTMLFAGSLA). Topologically, residues 63-64 (DR) are cytoplasmic. A helical transmembrane segment spans residues 65-85 (IGRKPITLFSALLFALASYFA). Residues 86–92 (ARSQSSD) are Periplasmic-facing. A helical transmembrane segment spans residues 93 to 113 (LFLVARFVQGVGAGCCYVVAF). Residues 114–131 (AILRDALDDKRRAKVLSM) are Cytoplasmic-facing. The helical transmembrane segment at 132-152 (VNGVTCIIPVIAPVIGHLIML) threads the bilayer. The Periplasmic portion of the chain corresponds to 153 to 157 (RFPWP). Residues 158–178 (SLFYTMAVMGLLVFGLCLFVL) traverse the membrane as a helical segment. The Cytoplasmic portion of the chain corresponds to 179-209 (RETYSKASFHSQTLPRVQTESFKQGFFISRV). A helical membrane pass occupies residues 210-230 (VITTLGVTTILSYVNVSPMLI). Over 231 to 242 (MGQMGFDRGQYS) the chain is Periplasmic. A helical transmembrane segment spans residues 243–263 (NTMAMTALVSMLASFSTPFLL). Topologically, residues 264–277 (NQFKEKSLILFSQT) are cytoplasmic. 2 helical membrane passes run 278–298 (LFAAAALVFILTQLGWLGQLF) and 299–319 (NLLGFGLVCSGFAIGFGVTMS). The Cytoplasmic portion of the chain corresponds to 320 to 333 (QALSPFVARAGVAS). A helical transmembrane segment spans residues 334 to 354 (SLLGIAQVCTSALYIWVMGLL). The Periplasmic segment spans residues 355-360 (EVSAIN). Residues 361 to 381 (ILLAILAVGALISITLMLAVP) traverse the membrane as a helical segment. Topologically, residues 382–396 (KLSEMVANEQIPESA) are cytoplasmic.

Belongs to the major facilitator superfamily. DHA1 family. MdtL (TC 2.A.1.2.22) subfamily.

The protein localises to the cell inner membrane. This is Multidrug resistance protein MdtL from Shewanella sp. (strain ANA-3).